Here is a 727-residue protein sequence, read N- to C-terminus: Fatty acid oxidation complex subunit alpha (727 aa).

An enoyl-CoA hydratase region spans residues 1-200 (MNDQQPFSAI…RQGLVDEAVP (200 aa)). A 3-hydroxyacyl-CoA dehydrogenase region spans residues 316–727 (KPIHYVGILG…PPTDEDDSAS (412 aa)).

It in the N-terminal section; belongs to the enoyl-CoA hydratase/isomerase family. In the central section; belongs to the 3-hydroxyacyl-CoA dehydrogenase family. In terms of assembly, heterotetramer of two alpha chains (FadJ) and two beta chains (FadI).

It localises to the cytoplasm. It catalyses the reaction a (3S)-3-hydroxyacyl-CoA = a (2E)-enoyl-CoA + H2O. The catalysed reaction is a 4-saturated-(3S)-3-hydroxyacyl-CoA = a (3E)-enoyl-CoA + H2O. It carries out the reaction a (3S)-3-hydroxyacyl-CoA + NAD(+) = a 3-oxoacyl-CoA + NADH + H(+). The enzyme catalyses (3S)-3-hydroxybutanoyl-CoA = (3R)-3-hydroxybutanoyl-CoA. The protein operates within lipid metabolism; fatty acid beta-oxidation. Its function is as follows. Catalyzes the formation of a hydroxyacyl-CoA by addition of water on enoyl-CoA. Also exhibits 3-hydroxyacyl-CoA epimerase and 3-hydroxyacyl-CoA dehydrogenase activities. This is Fatty acid oxidation complex subunit alpha from Pectobacterium carotovorum subsp. carotovorum (strain PC1).